The chain runs to 364 residues: Natterin-3 (364 aa).

Positions 1–18 (MKLSVLVVTLLAVSWTSA) are cleaved as a signal peptide. A propeptide spanning residues 19–42 (QPETFSIQTKEANMNPEPANIRVA) is cleaved from the precursor.

This sequence belongs to the natterin family. In terms of processing, contains 4 disulfide bonds. Expressed by the venom gland.

It localises to the secreted. Its activity is regulated as follows. Inhibited by tissue-kallikrein inhibitor TKI and trasylol. Plasma kallikrein inhibitor PKSI527 and classical inhibitors of serine-, metallo-, thiol- or aspartate-peptidases evokes a minor inhibition of the peptide digestion. Its function is as follows. Shows nociceptive, edema-inducing and kininogenase activity with release of kallidin from low molecular weight kininogen. The cleavage occurs at Met-Lys bonds. The protein is Natterin-3 of Thalassophryne nattereri (Copper Joe toadfish).